An 89-amino-acid polypeptide reads, in one-letter code: MALTSEQKKNVISRYKLHDNDTGSPEVQVAILTERINSLTEHLKLHKGDHHSRRGLLKMVGQRRALLNYLRDRHYERYRALIDKLGLRK.

The protein belongs to the universal ribosomal protein uS15 family. Part of the 30S ribosomal subunit. Forms a bridge to the 50S subunit in the 70S ribosome, contacting the 23S rRNA.

Functionally, one of the primary rRNA binding proteins, it binds directly to 16S rRNA where it helps nucleate assembly of the platform of the 30S subunit by binding and bridging several RNA helices of the 16S rRNA. In terms of biological role, forms an intersubunit bridge (bridge B4) with the 23S rRNA of the 50S subunit in the ribosome. In Pelotomaculum thermopropionicum (strain DSM 13744 / JCM 10971 / SI), this protein is Small ribosomal subunit protein uS15.